Reading from the N-terminus, the 728-residue chain is Lutropin-choriogonadotropic hormone receptor (728 aa).

The N-terminal stretch at Met1–Gly19 is a signal peptide. Topologically, residues Gly20 to Val389 are extracellular. 6 LRR repeats span residues Leu92–Asn116, Leu117–Ser142, Ala144–Gly166, Ser168–Gly191, Lys193–Gly215, and Ala216–Ala239. The helical transmembrane segment at Leu390 to Ile410 threads the bilayer. The Cytoplasmic portion of the chain corresponds to Thr411–Arg420. A helical transmembrane segment spans residues Phe421–Ala441. The Extracellular portion of the chain corresponds to Ser442–Thr466. Residues Cys464 and Cys539 are joined by a disulfide bond. The helical transmembrane segment at Ala467 to Ile487 threads the bilayer. At Glu488–His507 the chain is on the cytoplasmic side. The helical transmembrane segment at Ala508–Leu528 threads the bilayer. Residues Gly529–Ala551 lie on the Extracellular side of the membrane. A helical membrane pass occupies residues Tyr552–Ile572. Topologically, residues Lys573–Arg595 are cytoplasmic. A helical transmembrane segment spans residues Met596–Ser616. Over Ala617 to Lys630 the chain is Extracellular. A helical membrane pass occupies residues Ile631 to Phe651. Topologically, residues Thr652–Gln728 are cytoplasmic.

This sequence belongs to the G-protein coupled receptor 1 family. FSH/LSH/TSH subfamily. Expressed in ovarian follicle granulosa cells. Expressed in ovarian follicle theca cells.

The protein localises to the cell membrane. In terms of biological role, receptor for lutropin-choriogonadotropic hormone. The activity of this receptor is mediated by G proteins which activate adenylate cyclase. In Gallus gallus (Chicken), this protein is Lutropin-choriogonadotropic hormone receptor.